Here is an 85-residue protein sequence, read N- to C-terminus: Large ribosomal subunit protein bL31B (85 aa).

This sequence belongs to the bacterial ribosomal protein bL31 family. Type B subfamily. As to quaternary structure, part of the 50S ribosomal subunit.

The chain is Large ribosomal subunit protein bL31B from Serratia proteamaculans (strain 568).